The following is a 269-amino-acid chain: Photosystem I assembly factor PSA3, chloroplastic (269 aa).

Residues 1–37 (MGALPVAHSLALTAAFLPCRRPAAHGRCRRRRYRAVV) constitute a chloroplast transit peptide.

The protein resides in the plastid. Its subcellular location is the chloroplast thylakoid membrane. Nuclear genome-encoded factor required for the accumulation of photosystem I (PSI). Functions as a PSI biogenesis factor. Cooperates with PYG7 to promote the stable assembly of PSI in the thylakoid membrane. May target primarily the PsaC subunit. Does not seem to be required for the expression of chloroplast genes encoding PSI subunits. This Zea mays (Maize) protein is Photosystem I assembly factor PSA3, chloroplastic.